Reading from the N-terminus, the 304-residue chain is Mas-related G-protein coupled receptor member A1 (304 aa).

Over 1–17 (MDNTIPGGINITILIPN) the chain is Extracellular. N-linked (GlcNAc...) asparagine glycosylation occurs at Asn10. A helical membrane pass occupies residues 18–38 (LMIIIFGLVGLTGNGIVFWLL). Residues 39–53 (GFCLHRNAFSVYILN) lie on the Cytoplasmic side of the membrane. Residues 54–74 (LALADFFFLLGHIIDSILLLL) form a helical membrane-spanning segment. Position 75 (Asn75) is a topological domain, extracellular. The chain crosses the membrane as a helical span at residues 76 to 96 (VFYPITFLLCFYTIMMVLYIA). Topologically, residues 97–131 (GLSMLSAISTERCLSVLCPIWYHCHRPEHTSTVMC) are cytoplasmic. A helical transmembrane segment spans residues 132-152 (AVIWVLSLLICILNSYFCGFL). Topologically, residues 153 to 166 (NTQYKNENGCLALN) are extracellular. A helical transmembrane segment spans residues 167-187 (FFTAAYLMFLFVVLCLSSLAL). Residues 188–206 (VARLFCGTGQIKLTRLYVT) are Cytoplasmic-facing. Residues 207 to 227 (IILSILVFLLCGLPFGIHWFL) traverse the membrane as a helical segment. Topologically, residues 228-243 (LFKIKDDFHVFDLGFY) are extracellular. Residues 244-264 (LASVVLTAINSCANPIIYFFV) form a helical membrane-spanning segment. Topologically, residues 265–304 (GSFRHRLKHQTLKMVLQNALQDTPETAKIMVEMSRSKSEP) are cytoplasmic.

This sequence belongs to the G-protein coupled receptor 1 family. Mas subfamily. Expressed in a subset of sensory neurons that includes nociceptors. Expressed in the subclass of non-peptidergic sensory neurons that are IB4(+) and VR1(-).

The protein resides in the cell membrane. Functionally, orphan receptor activated by a subset of RFamide-family neuropeptides such as FLRF-amide and FMRF-amide. Mediates its action by association with G proteins that activate a phosphatidylinositol-calcium second messenger system. Its effect is mediated by G(q) and G(11) proteins. May regulate the function of nociceptive neurons by modulation of pain perception. This chain is Mas-related G-protein coupled receptor member A1 (Mrgpra1), found in Mus musculus (Mouse).